Reading from the N-terminus, the 456-residue chain is 26S proteasome non-ATPase regulatory subunit 12 (456 aa).

Ala2 bears the N-acetylalanine mark. Lys92 is covalently cross-linked (Glycyl lysine isopeptide (Lys-Gly) (interchain with G-Cter in SUMO1); alternate). Lys92 is covalently cross-linked (Glycyl lysine isopeptide (Lys-Gly) (interchain with G-Cter in SUMO2); alternate). N6-acetyllysine occurs at positions 221 and 368. Positions 242 to 420 (SICKHYRAIY…GIINFQRPKD (179 aa)) constitute a PCI domain.

Belongs to the proteasome subunit p55 family. In terms of assembly, component of the 19S proteasome regulatory particle complex. The 26S proteasome consists of a 20S core particle (CP) and two 19S regulatory subunits (RP). The regulatory particle is made of a lid composed of 9 subunits including PSMD12, a base containing 6 ATPases and few additional components. Interacts with ERCC6.

In terms of biological role, component of the 26S proteasome, a multiprotein complex involved in the ATP-dependent degradation of ubiquitinated proteins. This complex plays a key role in the maintenance of protein homeostasis by removing misfolded or damaged proteins, which could impair cellular functions, and by removing proteins whose functions are no longer required. Therefore, the proteasome participates in numerous cellular processes, including cell cycle progression, apoptosis, or DNA damage repair. This chain is 26S proteasome non-ATPase regulatory subunit 12 (PSMD12), found in Bos taurus (Bovine).